The chain runs to 541 residues: Beta-hexosaminidase subunit A2 (541 aa).

An N-terminal signal peptide occupies residues 1–21; it reads MINKFLTIFLIFSIVIIKVLS. Glu-314 (proton donor) is an active-site residue. 5 N-linked (GlcNAc...) asparagine glycosylation sites follow: Asn-322, Asn-336, Asn-356, Asn-435, and Asn-483.

Belongs to the glycosyl hydrolase 20 family.

The protein localises to the lysosome. It carries out the reaction Hydrolysis of terminal non-reducing N-acetyl-D-hexosamine residues in N-acetyl-beta-D-hexosaminides.. In terms of biological role, responsible for the degradation of GM2 gangliosides, and a variety of other molecules containing terminal N-acetyl hexosamines. The chain is Beta-hexosaminidase subunit A2 (hexa2) from Dictyostelium discoideum (Social amoeba).